The chain runs to 297 residues: MREEDHLRKGEKSHVFESLVSGAIAGLAARSAIAPLDTLKLRLQLGTDTLPHTLKSLIRHEGLLALWKGNLAGSIMYIIYGSVQFGTYSYTNAALLKVCDVPPTIHSTLAGAITGMASSLCSYPFDVLRTRLATTTTTTTTATTGRSGRGLYQHIERIYIREGLGGFFHGVATSMANVTVSTAAMFGTYEGIRARWPETNAGTAGAISGVISRTITFPLDTIRRRLQIRTSSELGQMTNNGYIGKHMQRSAITLCVQIVRDEGVKVLFRGIGLGLLKSVPNTAINLWVYENLMRVLT.

3 Solcar repeats span residues 13–94 (SHVF…TNAA), 102–195 (PPTI…IRAR), and 196–295 (WPET…LMRV). A run of 6 helical transmembrane segments spans residues 19–36 (LVSG…IAPL), 75–91 (IMYI…YSYT), 109–128 (LAGA…FDVL), 163–187 (GLGG…AMFG), 203–219 (TAGA…TFPL), and 270–287 (GIGL…INLW).

Belongs to the mitochondrial carrier (TC 2.A.29) family.

The protein resides in the mitochondrion inner membrane. Its function is as follows. Mitochondrial transporter that mediates uptake of thiamine pyrophosphate (ThPP) into mitochondria. The chain is Mitochondrial thiamine pyrophosphate carrier 1 (TPC1) from Vanderwaltozyma polyspora (strain ATCC 22028 / DSM 70294 / BCRC 21397 / CBS 2163 / NBRC 10782 / NRRL Y-8283 / UCD 57-17) (Kluyveromyces polysporus).